The sequence spans 147 residues: MKLHELRPAEGAVRDRKRKGRGTASGLGKTAGRGSNGQKARSGGGVRPGFEGGQMPLYRRLPKRGFTNIFANVYNEINIDRLNAFENGTVVTAELLKETGVIKKIEKDGIKILGNGNLEKSLTVQAQKFTKSAIEKIEAAGGKAEVM.

A compositionally biased stretch (basic and acidic residues) spans 1–14 (MKLHELRPAEGAVR). Positions 1-54 (MKLHELRPAEGAVRDRKRKGRGTASGLGKTAGRGSNGQKARSGGGVRPGFEGGQ) are disordered. Gly residues-rich tracts occupy residues 23–35 (TASG…GRGS) and 42–52 (SGGGVRPGFEG).

Belongs to the universal ribosomal protein uL15 family. Part of the 50S ribosomal subunit.

Binds to the 23S rRNA. This is Large ribosomal subunit protein uL15 from Alkaliphilus oremlandii (strain OhILAs) (Clostridium oremlandii (strain OhILAs)).